A 642-amino-acid chain; its full sequence is Rhotekin-2 (642 aa).

An REM-1 domain is found at 30–105 (IKRKKIRESM…AQKRTGHQDF (76 aa)). The region spanning 306–413 (LDMMSGFLSQ…WLDSLWQHIY (108 aa)) is the PH domain. 2 disordered regions span residues 505 to 563 (TVLS…GRPS) and 575 to 642 (LQKS…PKAW). Basic and acidic residues-rich tracts occupy residues 597–615 (PEKRAEESDLPEYTKKEYI) and 632–642 (SFREKMNPKAW).

The protein is Rhotekin-2 (rtkn2) of Danio rerio (Zebrafish).